A 310-amino-acid polypeptide reads, in one-letter code: MKVGIVGSGFVGSATAYALVLQGVAREVVLVDLDRKLAQAHAEDILHATPFAHPVWVRSGWYEDLEGARVVIVAAGVAQRPGETRLQLLDRNAQVFADVVPKILKAAPEAVLLIATNPVDVMTQVAYRLSGLPPERVVGSGTILDTARFRALLAQHLLVAPQSVHAYVVGEHGDSEVLVWSSAQVGGVDLEAFAQARGRALTPDDRLRIDEGVRRAAYRIIEGKGATYYGIGAGLARLTRAILTDEKGVFTVSLFTPEVEGVEEVALSLPRILGARGVEATLYPRLNEEERQALRRSAEILKGAASALGF.

Residues Val11, Asp32, Tyr62, and 76-77 contribute to the NAD(+) site; that span reads GV. Substrate is bound by residues Gln79, Arg85, and 117–120; that span reads NPVD. Residues 115–117 and Ser140 contribute to the NAD(+) site; that span reads ATN. Position 145–148 (145–148) interacts with substrate; sequence DTAR. The beta-D-fructose 1,6-bisphosphate site is built by Arg150 and His165. Catalysis depends on His172, which acts as the Proton acceptor. Phosphotyrosine is present on Tyr218. Thr227 is a substrate binding site.

Belongs to the LDH/MDH superfamily. LDH family. In terms of assembly, homotetramer.

It localises to the cytoplasm. It carries out the reaction (S)-lactate + NAD(+) = pyruvate + NADH + H(+). Its pathway is fermentation; pyruvate fermentation to lactate; (S)-lactate from pyruvate: step 1/1. Its activity is regulated as follows. Activated by citrate at pH 5. Allosterically activated by fructose 1,6-bisphosphate (FBP) at pH from 5.8 to 7.2. Catalyzes the conversion of lactate to pyruvate. The sequence is that of L-lactate dehydrogenase from Thermus aquaticus.